We begin with the raw amino-acid sequence, 534 residues long: Thromboxane-A synthase (534 aa).

The Cytoplasmic segment spans residues 1–10 (MEVLGFLSPE). Residues 11–31 (LNGPMVTMALAVVLLALLKWY) form a helical membrane-spanning segment. At 32–75 (STSAFSRLEKLGIRHPKPSPFIGNLTFFRQGFWESHMELRKQYG) the chain is on the lumenal side. A helical transmembrane segment spans residues 76-96 (PLSGYYLGRRMIVVISDPDMI). The Cytoplasmic portion of the chain corresponds to 97–223 (KQVLAEKFSN…RRFFAFSVPR (127 aa)). The chain crosses the membrane as a helical span at residues 224-244 (LILVLILSFPSIMVPLARILP). The Lumenal segment spans residues 245-336 (NKKRDEVNGF…LTVDEVVGQA (92 aa)). Residues 337–357 (FLFLIAGYEIITNTLSFVTYL) form a helical membrane-spanning segment. The Cytoplasmic portion of the chain corresponds to 358–534 (LATNPDCQEK…NGVYIRIVPR (177 aa)). Heme is bound at residue Cys-480.

It belongs to the cytochrome P450 family. As to quaternary structure, monomer. Heme is required as a cofactor. As to expression, expressed in lung, kidney and thymus.

Its subcellular location is the endoplasmic reticulum membrane. The catalysed reaction is prostaglandin H2 = thromboxane A2. It carries out the reaction prostaglandin H2 = (12S)-hydroxy-(5Z,8E,10E)-heptadecatrienoate + malonaldehyde. The enzyme catalyses a hydroperoxyeicosatetraenoate = an oxoeicosatetraenoate + H2O. It catalyses the reaction (15S)-hydroperoxy-(5Z,8Z,11Z,13E)-eicosatetraenoate = 15-oxo-(5Z,8Z,11Z,13E)-eicosatetraenoate + H2O. The catalysed reaction is (15S)-hydroperoxy-(5Z,8Z,11Z,13E)-eicosatetraenoate + AH2 = (15S)-hydroxy-(5Z,8Z,11Z,13E)-eicosatetraenoate + A + H2O. In terms of biological role, catalyzes the conversion of prostaglandin H2 (PGH2) to thromboxane A2 (TXA2), a potent inducer of blood vessel constriction and platelet aggregation. Also cleaves PGH2 to 12-hydroxy-heptadecatrienoicacid (12-HHT) and malondialdehyde, which is known to act as a mediator of DNA damage. 12-HHT and malondialdehyde are formed stoichiometrically in the same amounts as TXA2. Additionally, displays dehydratase activity, toward (15S)-hydroperoxy-(5Z,8Z,11Z,13E)-eicosatetraenoate (15(S)-HPETE) producing 15-KETE and 15-HETE. In Sus scrofa (Pig), this protein is Thromboxane-A synthase (TBXAS1).